Here is a 227-residue protein sequence, read N- to C-terminus: Cytochrome c oxidase subunit 2 (227 aa).

At 1–14 the chain is on the mitochondrial intermembrane side; it reads MAYPFQLGLQDATS. The helical transmembrane segment at 15-45 threads the bilayer; the sequence is PIMEELMNFHDHTLMIVFLISSLVLYIISLM. The Mitochondrial matrix segment spans residues 46–59; that stretch reads LTTKLTHTSTMDAQ. A helical membrane pass occupies residues 60–87; the sequence is EVETIWTILPAAILILIALPSLRILYMM. Residues 88-227 lie on the Mitochondrial intermembrane side of the membrane; sequence DEINNPVLTV…YFENWSASMI (140 aa). Cu cation contacts are provided by His161, Cys196, Glu198, Cys200, His204, and Met207. Glu198 contributes to the Mg(2+) binding site. Residue Tyr218 is modified to Phosphotyrosine.

This sequence belongs to the cytochrome c oxidase subunit 2 family. Component of the cytochrome c oxidase (complex IV, CIV), a multisubunit enzyme composed of 14 subunits. The complex is composed of a catalytic core of 3 subunits MT-CO1, MT-CO2 and MT-CO3, encoded in the mitochondrial DNA, and 11 supernumerary subunits COX4I, COX5A, COX5B, COX6A, COX6B, COX6C, COX7A, COX7B, COX7C, COX8 and NDUFA4, which are encoded in the nuclear genome. The complex exists as a monomer or a dimer and forms supercomplexes (SCs) in the inner mitochondrial membrane with NADH-ubiquinone oxidoreductase (complex I, CI) and ubiquinol-cytochrome c oxidoreductase (cytochrome b-c1 complex, complex III, CIII), resulting in different assemblies (supercomplex SCI(1)III(2)IV(1) and megacomplex MCI(2)III(2)IV(2)). Found in a complex with TMEM177, COA6, COX18, COX20, SCO1 and SCO2. Interacts with TMEM177 in a COX20-dependent manner. Interacts with COX20. Interacts with COX16. Requires Cu cation as cofactor.

It is found in the mitochondrion inner membrane. The enzyme catalyses 4 Fe(II)-[cytochrome c] + O2 + 8 H(+)(in) = 4 Fe(III)-[cytochrome c] + 2 H2O + 4 H(+)(out). Component of the cytochrome c oxidase, the last enzyme in the mitochondrial electron transport chain which drives oxidative phosphorylation. The respiratory chain contains 3 multisubunit complexes succinate dehydrogenase (complex II, CII), ubiquinol-cytochrome c oxidoreductase (cytochrome b-c1 complex, complex III, CIII) and cytochrome c oxidase (complex IV, CIV), that cooperate to transfer electrons derived from NADH and succinate to molecular oxygen, creating an electrochemical gradient over the inner membrane that drives transmembrane transport and the ATP synthase. Cytochrome c oxidase is the component of the respiratory chain that catalyzes the reduction of oxygen to water. Electrons originating from reduced cytochrome c in the intermembrane space (IMS) are transferred via the dinuclear copper A center (CU(A)) of subunit 2 and heme A of subunit 1 to the active site in subunit 1, a binuclear center (BNC) formed by heme A3 and copper B (CU(B)). The BNC reduces molecular oxygen to 2 water molecules using 4 electrons from cytochrome c in the IMS and 4 protons from the mitochondrial matrix. This chain is Cytochrome c oxidase subunit 2 (MT-CO2), found in Praomys tullbergi (Tullberg's soft-furred rat).